We begin with the raw amino-acid sequence, 165 residues long: Endoribonuclease YbeY (165 aa).

His-130, His-134, and His-140 together coordinate Zn(2+).

The protein belongs to the endoribonuclease YbeY family. Requires Zn(2+) as cofactor.

Its subcellular location is the cytoplasm. Functionally, single strand-specific metallo-endoribonuclease involved in late-stage 70S ribosome quality control and in maturation of the 3' terminus of the 16S rRNA. This chain is Endoribonuclease YbeY, found in Streptococcus pyogenes serotype M28 (strain MGAS6180).